A 2758-amino-acid polypeptide reads, in one-letter code: Highly reducing polyketide synthase NEC1 (2758 aa).

Residues 153–492 enclose the Ketosynthase family 3 (KS3) domain; it reads EASSPIIGLD…GSNAHVVMDD (340 aa). A disordered region spans residues 512 to 576; sequence PRLPGSSSSR…NTDTLQTTDT (65 aa). Residues 566–576 show a composition bias toward low complexity; the sequence is TNTDTLQTTDT. Positions 700 to 1044 are malonyl-CoA:ACP transacylase (MAT) domain; sequence VFTGQGAQWP…GYATVLKRGD (345 aa). Ser790 functions as the For malonyltransferase activity in the catalytic mechanism. An N-terminal hotdog fold region spans residues 1124 to 1255; sequence HELLGAPVPD…GFVRTEYSQT (132 aa). The interval 1124 to 1442 is dehydratase (DH) domain; sequence HELLGAPVPD…VFKTIPNTAS (319 aa). Residues 1124–1443 enclose the PKS/mFAS DH domain; sequence HELLGAPVPD…FKTIPNTASS (320 aa). Catalysis depends on His1156, which acts as the Proton acceptor; for dehydratase activity. The C-terminal hotdog fold stretch occupies residues 1283–1443; the sequence is TSMVHADKVY…FKTIPNTASS (161 aa). The active-site Proton donor; for dehydratase activity is Asp1351. Residues 1622-1727 are methyltransferase (CMet) domain; that stretch reads LEVGGGTGGA…RKLLKPGGKL (106 aa). Residues 2031 to 2344 form an enoyl reductase (ER) domain region; it reads GTADVCFSED…LGKGEDAVVL (314 aa). Positions 2372–2553 are ketoreductase (KR) domain; it reads ASYMVVGGLG…PVAVSLDLPV (182 aa). Residues 2673–2750 form the Carrier domain; the sequence is EAQAVVLDAL…ALAAAVAGRS (78 aa). Residue Ser2710 is modified to O-(pantetheine 4'-phosphoryl)serine.

Its function is as follows. Highly reducing polyketide synthase; part of the gene cluster that mediates the biosynthesis of nectriapyrone and its analogs phomopyrone A, acropyrone and zaepyrone. The nectriapyrone biosynthetic gene cluster consists of two genes, the highly reducing polyketide synthase NEC1 that produces a demethylated analog of nectriapyrone from one unit of acetyl-CoA and one unit of malonyl-CoA; and the O-methyltransferase NEC2 that further methylates the NEC1 product to yield nectriapyrone. Nectriapyrone is further hydrolyzed to nectriapyrone D, also known as gulypyrone B, by an unidentified hydrolase localized outside the nectriapyrone cluster. This is Highly reducing polyketide synthase NEC1 from Pyricularia oryzae (strain 70-15 / ATCC MYA-4617 / FGSC 8958) (Rice blast fungus).